Reading from the N-terminus, the 102-residue chain is Small ribosomal subunit protein bS18 (102 aa).

This sequence belongs to the bacterial ribosomal protein bS18 family. As to quaternary structure, part of the 30S ribosomal subunit. Forms a tight heterodimer with protein bS6.

Functionally, binds as a heterodimer with protein bS6 to the central domain of the 16S rRNA, where it helps stabilize the platform of the 30S subunit. The chain is Small ribosomal subunit protein bS18 from Orientia tsutsugamushi (strain Boryong) (Rickettsia tsutsugamushi).